A 368-amino-acid chain; its full sequence is Propane 2-monooxygenase, hydroxylase component small subunit (368 aa).

Positions 1 to 33 (MSAPAQPRERSFPSIEFTDAEADAREFPSSRSR) are disordered.

The protein belongs to the TmoE/XamoE family. As to quaternary structure, the propane 2-monooxygenase multicomponent enzyme system is composed of an electron transfer component and a monooxygenase component interacting with the effector protein PrmD. The electron transfer component is composed of a reductase (PrmB), and the monooxygenase component is formed by a large subunit (PrmA) and a small subunit (PrmC). Probably requires the presence of the chaperonin-like protein PrmG to ensure a productive folding, resulting of a soluble PrmC, which leads to the active form of PrmABCD.

It carries out the reaction propane + NADH + O2 + H(+) = propan-2-ol + NAD(+) + H2O. The enzyme catalyses phenol + NADH + O2 + H(+) = hydroquinone + NAD(+) + H2O. Component of the propane 2-monooxygenase multicomponent enzyme system which is involved in the degradation of propane via the O2-dependent hydroxylation of propane. Under acetone induction, also able to catalyze the oxidation of phenol to yield hydroquinone. The protein is Propane 2-monooxygenase, hydroxylase component small subunit of Gordonia sp. (strain TY-5).